The sequence spans 1857 residues: Ankyrin repeat domain-containing protein 31 (1857 aa).

Disordered stretches follow at residues 1–30 (MENGAEASDCDSDETVIEGSVTENEPEDEE) and 195–215 (SEPGEEVTQTMTSKETKDEES). Polar residues predominate over residues 195–207 (SEPGEEVTQTMTS). ANK repeat units lie at residues 475 to 504 (FGENLLYKAALHNDVDLVRCCIKNGENVNQ), 508 to 537 (DGWTALHEASIGGYYQAVSELLKGGADVNV), and 541 to 570 (YQITPLHDAVMNRHYKVAELLLMSGADPLF). Polar residues predominate over residues 676–691 (KFGKSNLNSVKNSRTN). Disordered stretches follow at residues 676–711 (KFGKSNLNSVKNSRTNVSKRKGQKNRQQKKTQVDDR), 813–844 (VTTHQQPHTNQEQYSSPYKSLGNNSSNEKGKA), 995–1038 (RDSS…TVVH), 1046–1065 (KAEKRREDLPGNEPINNTDF), and 1075–1137 (ANSS…QNFR). The segment covering 692-704 (VSKRKGQKNRQQK) has biased composition (basic residues). Residues 814–839 (TTHQQPHTNQEQYSSPYKSLGNNSSN) are compositionally biased toward polar residues. Residues 1008–1019 (SLERKQDTDKNY) show a composition bias toward basic and acidic residues. Residues 1023-1032 (GPNTSSSSRP) show a composition bias toward polar residues. Residues 1082 to 1136 (QRKEKENVRKSDAELTHNDSEAERTLKSCEEKKKNMDSETHSPCDIQEHRKDQNF) are compositionally biased toward basic and acidic residues. 3 ANK repeats span residues 1162 to 1191 (KGESQLHVAARGGNLSRVKVLIEARADVNL), 1195 to 1224 (AGWTPLHKAASGGFDDVIIELLQAGANVNC), and 1228 to 1257 (DGIVPLHGASAGNHLKAAEILLEHGANPNQ). Disordered stretches follow at residues 1457–1479 (NSDISSDKKSQEPPTMGDSAHAQ), 1540–1570 (GGLLRSKPTDDAEKIASSSQPAALTPHAENS), 1609–1640 (DPHSQKLSRCNPKRRNKKTASQQPSAGAAEPL), and 1663–1697 (AAAASHTDSTQSSLSSASAHQHPTKTVPHRNTTPR). Over residues 1555–1570 (ASSSQPAALTPHAENS) the composition is skewed to polar residues. A compositionally biased stretch (low complexity) spans 1663–1683 (AAAASHTDSTQSSLSSASAHQ). One can recognise an RAMA domain in the interval 1687–1782 (KTVPHRNTTP…TYLGRELVKC (96 aa)).

As to quaternary structure, interacts with REC114; the interaction is direct. Interacts with IHO1. Present in meiotic cells (at protein level).

It localises to the nucleus. Its subcellular location is the chromosome. Required for DNA double-strand breaks (DSBs) formation during meiotic recombination. Regulates the spatial and temporal patterns of pre-DSB recombinosome assembly and recombination activity by acting as a scaffold that anchors REC114 and other factors to specific genomic locations, thereby regulating DSB formation. Plays a key role in recombination in the pseudoautosomal regions of sex chromosomes. In Mus musculus (Mouse), this protein is Ankyrin repeat domain-containing protein 31.